Consider the following 423-residue polypeptide: Osteomodulin (423 aa).

The signal sequence occupies residues 1 to 20 (MGCLRPIYVLFFCFVVRVYG). Residues tyrosine 22, tyrosine 25, tyrosine 31, tyrosine 39, tyrosine 51, and tyrosine 77 each carry the sulfotyrosine modification. In terms of domain architecture, LRRNT spans 53 to 91 (APFYQNILGCAKECFCPTNFPTSMYCDNRKLKTIPDIPM). LRR repeat units follow at residues 92–113 (HIQQ…SFIN), 116–129 (HLKE…KIKS), 142–164 (NLQQ…PKSL), 165–184 (ERLL…AMDG), 187–207 (NVTM…KGKI), 213–233 (KLMQ…GLPL), 234–255 (SLMY…YFQK), 258–279 (KLHA…IFNL), 281–294 (NLIE…KLKQ), 301–322 (NLEH…MMCP), and 331–353 (HLTY…IFFC). Asparagine 113 and asparagine 121 each carry an N-linked (GlcNAc...) asparagine glycan. An N-linked (GlcNAc...) asparagine glycan is attached at asparagine 187. N-linked (GlcNAc...) asparagine glycans are attached at residues asparagine 242 and asparagine 278. The N-linked (GlcNAc...) asparagine glycan is linked to asparagine 316. Cysteine 321 and cysteine 353 form a disulfide bridge. The tract at residues 383–408 (YQDEEEEEEDDSQDHTLEGQEETEEH) is disordered. Residues 385–394 (DEEEEEEDDS) are compositionally biased toward acidic residues. 2 positions are modified to sulfotyrosine: tyrosine 413 and tyrosine 414.

It belongs to the small leucine-rich proteoglycan (SLRP) family. SLRP class II subfamily. As to quaternary structure, binds the alpha(V)beta(3)-integrin. Glycosylated; contains keratan sulfate. As to expression, osteoblast and odontoblast. Expressed in femoral bone and calvaria tissues. Detected in femoral head, rib, tendon and bone marrow.

It is found in the secreted. The protein localises to the extracellular space. It localises to the extracellular matrix. Its function is as follows. May be implicated in biomineralization processes. Has a function in binding of osteoblasts via the alpha(V)beta(3)-integrin. The protein is Osteomodulin (Omd) of Rattus norvegicus (Rat).